We begin with the raw amino-acid sequence, 449 residues long: Aspartate aminotransferase 3, chloroplastic (449 aa).

The transit peptide at 1–43 (MKTTHFSSSSSSDRRIGALLRHLNSGSDSDNLSSLYASPTSGG) directs the protein to the chloroplast. Residues G81, W178, and N231 each contribute to the L-aspartate site. An N6-(pyridoxal phosphate)lysine modification is found at K295. L-aspartate is bound at residue R423.

It belongs to the class-I pyridoxal-phosphate-dependent aminotransferase family. In terms of assembly, homodimer. Pyridoxal 5'-phosphate is required as a cofactor. As to expression, expressed in roots, cauline leaves, flowers, hypocotyl epidermis and root hair cells.

It localises to the plastid. The protein resides in the chloroplast. It catalyses the reaction L-aspartate + 2-oxoglutarate = oxaloacetate + L-glutamate. In terms of biological role, amino acid aminotransferase important for the metabolism of amino acids and Krebs-cycle related organic acids. No activity with D-Asp or D-Ala as amino donors. In plants, it is involved in nitrogen metabolism and in aspects of carbon and energy metabolism. This Arabidopsis thaliana (Mouse-ear cress) protein is Aspartate aminotransferase 3, chloroplastic (ASP3).